The chain runs to 331 residues: NADH-cytochrome b5 reductase 2 (331 aa).

The chain crosses the membrane as a helical span at residues 36-56 (VGILIASAVGMAGFGTYFMFG). The 106-residue stretch at 80 to 185 (KGFVSLQLDD…KGPLPKYEWS (106 aa)) folds into the FAD-binding FR-type domain. Position 188-223 (188-223 (KHPHVAMIAGGTGITPMYQIMRAIFKNPADKTKVTL)) interacts with FAD.

It belongs to the flavoprotein pyridine nucleotide cytochrome reductase family. It depends on FAD as a cofactor.

It localises to the mitochondrion outer membrane. It carries out the reaction 2 Fe(III)-[cytochrome b5] + NADH = 2 Fe(II)-[cytochrome b5] + NAD(+) + H(+). Functionally, may mediate the reduction of outer membrane cytochrome b5. This is NADH-cytochrome b5 reductase 2 (MCR1) from Pyricularia oryzae (strain 70-15 / ATCC MYA-4617 / FGSC 8958) (Rice blast fungus).